The primary structure comprises 97 residues: YcgL domain-containing protein Pmen_1774 (97 aa).

The region spanning 3 to 87 (RICSIYKSPR…PEEDYIQHLP (85 aa)) is the YcgL domain.

In Ectopseudomonas mendocina (strain ymp) (Pseudomonas mendocina), this protein is YcgL domain-containing protein Pmen_1774.